The primary structure comprises 144 residues: uncharacterized protein (144 aa).

A helical transmembrane segment spans residues 25-47 (LTLLDGCCVALVLALTAWSGFFV).

It is found in the membrane. This is an uncharacterized protein from Treponema pallidum (strain Nichols).